An 873-amino-acid chain; its full sequence is Zinc fingers and homeoboxes protein 1 (873 aa).

Threonine 36 is subject to Phosphothreonine. Residues 41–63 (AKAESVSSDEEVHGSVDSDNQQN) are disordered. Phosphoserine is present on residues serine 45, serine 47, and serine 48. A compositionally biased stretch (basic and acidic residues) spans 50-63 (EEVHGSVDSDNQQN). 2 consecutive C2H2-type zinc fingers follow at residues 70-93 (YECKYCTFQTPDLNMFTFHVDSEH) and 102-125 (YVCVECNFLTKRYDALSEHNLKYH). A Glycyl lysine isopeptide (Lys-Gly) (interchain with G-Cter in SUMO2) cross-link involves residue lysine 159. The disordered stretch occupies residues 198-247 (VHHNSAEGTSEEKENGVKASQEENAESVSSSALESNTSTSTINRVHPSPA). Serine 202 is subject to Phosphoserine. Over residues 223–238 (ESVSSSALESNTSTST) the composition is skewed to low complexity. Positions 272-432 (NSNLLPKVLI…QTNVQKSQVP (161 aa)) are required for dimerization. Positions 272-564 (NSNLLPKVLI…SQQKQSWNPF (293 aa)) are required for interaction with NFYA. A DNA-binding region (homeobox 1) is located at residues 284–346 (NSIPTYNAAL…LKHGVSWTPE (63 aa)). A disordered region spans residues 429 to 456 (SQVPAAQPATDTKPATAAVPSSPSVRPE). Glycyl lysine isopeptide (Lys-Gly) (interchain with G-Cter in SUMO2) cross-links involve residues lysine 441 and lysine 485. Positions 464–526 (SFGIRAKKTK…YNQRNSKSNQ (63 aa)) form a DNA-binding region, homeobox 2. 3 disordered regions span residues 541–568 (DSSDETPEPPAAAASQQKQSWNPFPDFA), 627–668 (DEKI…CKKT), and 731–767 (SSSLNGLSSLRRRGRGRPKGRGRGRPRGRPRGGKRMN). A DNA-binding region (homeobox 3) is located at residues 569 to 630 (PQKFKEKTAE…KTKALKDEKI (62 aa)). A Glycyl lysine isopeptide (Lys-Gly) (interchain with G-Cter in SUMO2) cross-link involves residue lysine 629. Serine 648 carries the phosphoserine modification. The homeobox 4 DNA-binding region spans 660-722 (GTGKICKKTP…YAWKNGNLKW (63 aa)). Residues 734–768 (LNGLSSLRRRGRGRPKGRGRGRPRGRPRGGKRMNT) form a required for nuclear localization region. Residues 740–764 (LRRRGRGRPKGRGRGRPRGRPRGGK) show a composition bias toward basic residues. At serine 774 the chain carries Phosphoserine. A DNA-binding region (homeobox 5) is located at residues 777–832 (KFKTGTAILKDYYLKHKFLNEQDLDELVNRSHMGYEQVREWFAERQRRSELGIELF). Residues 829-873 (IELFEENEEEDEVVDDQEEDEEETDDSDTWEPPRHVKRKLSKSDD) form a disordered region. A compositionally biased stretch (acidic residues) spans 831–857 (LFEENEEEDEVVDDQEEDEEETDDSDT). Residues 831–873 (LFEENEEEDEVVDDQEEDEEETDDSDTWEPPRHVKRKLSKSDD) are required for repressor activity. Basic residues predominate over residues 863–873 (HVKRKLSKSDD).

The protein belongs to the ZHX family. As to quaternary structure, forms homodimers. Heterodimer (via HD1 domain) with ZHX2 (via HD1 domain). Also forms a heterodimer with ZHX3 which is a prerequisite for repressor activity. Interacts with ATF7IP and NFYA. Interacts (via homeobox domains) with DNMT3B (via PWWP domain). Widely expressed with highest levels in brain.

The protein localises to the nucleus. Acts as a transcriptional repressor. Increases DNMT3B-mediated repressive transcriptional activity when DNMT3B is tethered to DNA. May link molecule between DNMT3B and other co-repressor proteins. This Mus musculus (Mouse) protein is Zinc fingers and homeoboxes protein 1 (Zhx1).